The sequence spans 303 residues: Sulfate adenylyltransferase subunit 2 (303 aa).

Residues 282-303 (SGRLIDHDESGSMEKKKREGYF) are disordered.

Belongs to the PAPS reductase family. CysD subfamily. In terms of assembly, heterodimer composed of CysD, the smaller subunit, and CysN.

The catalysed reaction is sulfate + ATP + H(+) = adenosine 5'-phosphosulfate + diphosphate. It functions in the pathway sulfur metabolism; hydrogen sulfide biosynthesis; sulfite from sulfate: step 1/3. With CysN forms the ATP sulfurylase (ATPS) that catalyzes the adenylation of sulfate producing adenosine 5'-phosphosulfate (APS) and diphosphate, the first enzymatic step in sulfur assimilation pathway. APS synthesis involves the formation of a high-energy phosphoric-sulfuric acid anhydride bond driven by GTP hydrolysis by CysN coupled to ATP hydrolysis by CysD. The sequence is that of Sulfate adenylyltransferase subunit 2 from Maricaulis maris (strain MCS10) (Caulobacter maris).